Reading from the N-terminus, the 34-residue chain is Endoglucanase 1 (34 aa).

It catalyses the reaction Endohydrolysis of (1-&gt;4)-beta-D-glucosidic linkages in cellulose, lichenin and cereal beta-D-glucans.. This is Endoglucanase 1 from Sclerotinia sclerotiorum (White mold).